The primary structure comprises 340 residues: Glycerol-3-phosphate dehydrogenase [NAD(P)+] (340 aa).

Positions 11, 12, 33, and 106 each coordinate NADPH. 3 residues coordinate sn-glycerol 3-phosphate: Lys-106, Gly-137, and Ser-139. Residue Ala-141 participates in NADPH binding. Positions 192, 245, 255, 256, and 257 each coordinate sn-glycerol 3-phosphate. Lys-192 serves as the catalytic Proton acceptor. NADPH is bound at residue Arg-256. NADPH contacts are provided by Val-280 and Glu-282.

Belongs to the NAD-dependent glycerol-3-phosphate dehydrogenase family.

The protein localises to the cytoplasm. It carries out the reaction sn-glycerol 3-phosphate + NAD(+) = dihydroxyacetone phosphate + NADH + H(+). The catalysed reaction is sn-glycerol 3-phosphate + NADP(+) = dihydroxyacetone phosphate + NADPH + H(+). The protein operates within membrane lipid metabolism; glycerophospholipid metabolism. Catalyzes the reduction of the glycolytic intermediate dihydroxyacetone phosphate (DHAP) to sn-glycerol 3-phosphate (G3P), the key precursor for phospholipid synthesis. In Bacillus cereus (strain 03BB102), this protein is Glycerol-3-phosphate dehydrogenase [NAD(P)+].